The chain runs to 226 residues: Urease accessory protein UreF (226 aa).

This sequence belongs to the UreF family. UreD, UreF and UreG form a complex that acts as a GTP-hydrolysis-dependent molecular chaperone, activating the urease apoprotein by helping to assemble the nickel containing metallocenter of UreC. The UreE protein probably delivers the nickel.

The protein resides in the cytoplasm. Functionally, required for maturation of urease via the functional incorporation of the urease nickel metallocenter. In Janthinobacterium sp. (strain Marseille) (Minibacterium massiliensis), this protein is Urease accessory protein UreF.